The primary structure comprises 190 residues: UPF0301 protein Pden_0436 (190 aa).

Belongs to the UPF0301 (AlgH) family.

This Paracoccus denitrificans (strain Pd 1222) protein is UPF0301 protein Pden_0436.